Reading from the N-terminus, the 335-residue chain is MLP-like protein 28 (335 aa).

It belongs to the MLP family.

Can bind steroids (in vitro), and may also bind other types of hydrophobic ligands. The protein is MLP-like protein 28 (MLP28) of Arabidopsis thaliana (Mouse-ear cress).